A 97-amino-acid polypeptide reads, in one-letter code: uncharacterized protein (97 aa).

This is an uncharacterized protein from Methanocaldococcus jannaschii (strain ATCC 43067 / DSM 2661 / JAL-1 / JCM 10045 / NBRC 100440) (Methanococcus jannaschii).